A 92-amino-acid polypeptide reads, in one-letter code: Probable acyl carrier protein (92 aa).

Residues 11-92 (QVTFEELSAL…QVNATLRTAV (82 aa)) form the Carrier domain. O-(pantetheine 4'-phosphoryl)serine is present on S49.

Post-translationally, 4'-phosphopantetheine is transferred from CoA to a specific serine of the apo-ACP-like protein.

Functionally, involved in developmentally regulated synthesis of a compound biosynthetically related to polyketide antibiotics which is essential for spore color in Streptomyces halstedii. This Streptomyces halstedii protein is Probable acyl carrier protein (sch3).